The chain runs to 54 residues: Metallothionein-2 (54 aa).

The protein belongs to the metallothionein superfamily. Type 11 family.

This chain is Metallothionein-2 (MTP2), found in Yarrowia lipolytica (strain CLIB 122 / E 150) (Yeast).